Here is a 514-residue protein sequence, read N- to C-terminus: 2,3-bisphosphoglycerate-independent phosphoglycerate mutase (514 aa).

Residues aspartate 14 and serine 64 each coordinate Mn(2+). The active-site Phosphoserine intermediate is the serine 64. Substrate-binding positions include histidine 125, 155-156, arginine 187, arginine 193, 263-266, and lysine 336; these read RD and RADR. Mn(2+)-binding residues include aspartate 403, histidine 407, aspartate 444, histidine 445, and histidine 463.

The protein belongs to the BPG-independent phosphoglycerate mutase family. In terms of assembly, monomer. Requires Mn(2+) as cofactor.

The catalysed reaction is (2R)-2-phosphoglycerate = (2R)-3-phosphoglycerate. It functions in the pathway carbohydrate degradation; glycolysis; pyruvate from D-glyceraldehyde 3-phosphate: step 3/5. Its function is as follows. Catalyzes the interconversion of 2-phosphoglycerate and 3-phosphoglycerate. This chain is 2,3-bisphosphoglycerate-independent phosphoglycerate mutase, found in Shewanella halifaxensis (strain HAW-EB4).